The chain runs to 256 residues: Imidazole glycerol phosphate synthase subunit HisF (256 aa).

Catalysis depends on residues aspartate 12 and aspartate 131.

This sequence belongs to the HisA/HisF family. Heterodimer of HisH and HisF.

Its subcellular location is the cytoplasm. It catalyses the reaction 5-[(5-phospho-1-deoxy-D-ribulos-1-ylimino)methylamino]-1-(5-phospho-beta-D-ribosyl)imidazole-4-carboxamide + L-glutamine = D-erythro-1-(imidazol-4-yl)glycerol 3-phosphate + 5-amino-1-(5-phospho-beta-D-ribosyl)imidazole-4-carboxamide + L-glutamate + H(+). It functions in the pathway amino-acid biosynthesis; L-histidine biosynthesis; L-histidine from 5-phospho-alpha-D-ribose 1-diphosphate: step 5/9. In terms of biological role, IGPS catalyzes the conversion of PRFAR and glutamine to IGP, AICAR and glutamate. The HisF subunit catalyzes the cyclization activity that produces IGP and AICAR from PRFAR using the ammonia provided by the HisH subunit. This chain is Imidazole glycerol phosphate synthase subunit HisF, found in Pseudomonas fluorescens (strain SBW25).